We begin with the raw amino-acid sequence, 91 residues long: Dynein 8 kDa light chain, flagellar outer arm (91 aa).

Belongs to the dynein light chain family. As to quaternary structure, consists of at least 3 heavy chains (alpha, beta and gamma), 2 intermediate chains and 8 light chains.

The protein resides in the cytoplasm. Its subcellular location is the cytoskeleton. It is found in the flagellum axoneme. In Chlamydomonas reinhardtii (Chlamydomonas smithii), this protein is Dynein 8 kDa light chain, flagellar outer arm.